We begin with the raw amino-acid sequence, 306 residues long: Recombination-associated protein RdgC (306 aa).

The protein belongs to the RdgC family.

The protein resides in the cytoplasm. It localises to the nucleoid. In terms of biological role, may be involved in recombination. This chain is Recombination-associated protein RdgC, found in Pseudomonas putida (strain GB-1).